The sequence spans 345 residues: Meiotically up-regulated gene 97 protein (345 aa).

2 helical membrane passes run 292-312 (MWVLSLLLFSAGGSVLIGLWM) and 319-329 (FAHGMLLNLGI).

Its subcellular location is the membrane. Its function is as follows. Required for correct meiotic chromosome segregation. Appears to also have role in sporulation. This is Meiotically up-regulated gene 97 protein (mug97) from Schizosaccharomyces pombe (strain 972 / ATCC 24843) (Fission yeast).